Here is a 341-residue protein sequence, read N- to C-terminus: Ribosomal RNA small subunit methyltransferase H (341 aa).

S-adenosyl-L-methionine-binding positions include 47 to 49 (GGY), D64, F91, D109, and Q116.

The protein belongs to the methyltransferase superfamily. RsmH family.

The protein resides in the cytoplasm. It carries out the reaction cytidine(1402) in 16S rRNA + S-adenosyl-L-methionine = N(4)-methylcytidine(1402) in 16S rRNA + S-adenosyl-L-homocysteine + H(+). In terms of biological role, specifically methylates the N4 position of cytidine in position 1402 (C1402) of 16S rRNA. The polypeptide is Ribosomal RNA small subunit methyltransferase H (Sinorhizobium medicae (strain WSM419) (Ensifer medicae)).